A 239-amino-acid polypeptide reads, in one-letter code: Phosphoribosylaminoimidazole-succinocarboxamide synthase (239 aa).

This sequence belongs to the SAICAR synthetase family.

It carries out the reaction 5-amino-1-(5-phospho-D-ribosyl)imidazole-4-carboxylate + L-aspartate + ATP = (2S)-2-[5-amino-1-(5-phospho-beta-D-ribosyl)imidazole-4-carboxamido]succinate + ADP + phosphate + 2 H(+). It functions in the pathway purine metabolism; IMP biosynthesis via de novo pathway; 5-amino-1-(5-phospho-D-ribosyl)imidazole-4-carboxamide from 5-amino-1-(5-phospho-D-ribosyl)imidazole-4-carboxylate: step 1/2. The polypeptide is Phosphoribosylaminoimidazole-succinocarboxamide synthase (Bacillus thuringiensis subsp. konkukian (strain 97-27)).